The chain runs to 89 residues: Putative defensin-like protein 230 (89 aa).

Positions 1–26 (MRSVIWFIVSYTLMLLVLRGGKEVEA) are cleaved as a signal peptide. 4 disulfide bridges follow: cysteine 30–cysteine 84, cysteine 40–cysteine 65, cysteine 48–cysteine 78, and cysteine 63–cysteine 80.

The protein belongs to the DEFL family.

Its subcellular location is the secreted. The chain is Putative defensin-like protein 230 (SCRL24) from Arabidopsis thaliana (Mouse-ear cress).